A 77-amino-acid polypeptide reads, in one-letter code: Putative defensin-like protein 30 (77 aa).

A signal peptide spans 1–26 (MASSSKCAFLVFLCMIVLLAPSEVHA). Cystine bridges form between Cys-43–Cys-63, Cys-49–Cys-72, and Cys-53–Cys-74.

Belongs to the DEFL family.

Its subcellular location is the secreted. The protein is Putative defensin-like protein 30 of Arabidopsis thaliana (Mouse-ear cress).